A 406-amino-acid chain; its full sequence is MSKLYVGSEVGQLRRVLLNRPERALTHLTPSNCHELLFDDVLAVEAAGEEHDAFARTLREQDVEVLLLHDLLVETLAVPEAKQWLLNTQISDFRYGPTFARDLRQYFAEMDDEHLASILLGGLAYSELPIKSSSMLPKMKRPLDFVIEPLPNHLFTRDTSCWVYGGVSLNPMMMPARQRETNHLRAIYRWHPTFAGQDFINYFGDEDQHYDNANVEGGDVLVIGKGAVLIGMSERTTPQGVENLAASLFKSGQAKEVIAIDLPKHRSCMHLDTVMTHMDVDTFSVYPEIMRKDLDTWRLTPKGNGEMHVEASHNYLHAIESALGLDQLKIITTGGDSYEAEREQWNDANNVLTVKPGVVIGYERNVYTNEKYDKAGIEVLTIPGNELGRGRGGARCMSCPIERDDI.

The active-site Amidino-cysteine intermediate is cysteine 396.

The protein belongs to the arginine deiminase family.

The protein resides in the cytoplasm. It carries out the reaction L-arginine + H2O = L-citrulline + NH4(+). It functions in the pathway amino-acid degradation; L-arginine degradation via ADI pathway; carbamoyl phosphate from L-arginine: step 1/2. In Vibrio campbellii (strain ATCC BAA-1116), this protein is Arginine deiminase.